The chain runs to 222 residues: Putative N-acetylmannosamine-6-phosphate 2-epimerase (222 aa).

It belongs to the NanE family.

The enzyme catalyses an N-acyl-D-glucosamine 6-phosphate = an N-acyl-D-mannosamine 6-phosphate. It functions in the pathway amino-sugar metabolism; N-acetylneuraminate degradation; D-fructose 6-phosphate from N-acetylneuraminate: step 3/5. Converts N-acetylmannosamine-6-phosphate (ManNAc-6-P) to N-acetylglucosamine-6-phosphate (GlcNAc-6-P). The sequence is that of Putative N-acetylmannosamine-6-phosphate 2-epimerase from Oceanobacillus iheyensis (strain DSM 14371 / CIP 107618 / JCM 11309 / KCTC 3954 / HTE831).